The following is a 201-amino-acid chain: Small ribosomal subunit protein uS4c (201 aa).

A disordered region spans residues 15–45; it reads LGDLPGLSRKAIKRSYPPGEHGQKSRKPSEY. Residues 35-45 are compositionally biased toward basic and acidic residues; that stretch reads HGQKSRKPSEY. An S4 RNA-binding domain is found at 90-153; that stretch reads MRLDNTVFRL…ASRKLVENYL (64 aa).

The protein belongs to the universal ribosomal protein uS4 family. As to quaternary structure, part of the 30S ribosomal subunit. Contacts protein S5. The interaction surface between S4 and S5 is involved in control of translational fidelity.

The protein localises to the plastid. It is found in the chloroplast. In terms of biological role, one of the primary rRNA binding proteins, it binds directly to 16S rRNA where it nucleates assembly of the body of the 30S subunit. With S5 and S12 plays an important role in translational accuracy. The chain is Small ribosomal subunit protein uS4c (rps4) from Pyropia yezoensis (Susabi-nori).